Reading from the N-terminus, the 407-residue chain is Multifunctional CCA protein (407 aa).

ATP contacts are provided by glycine 8 and arginine 11. Residues glycine 8 and arginine 11 each coordinate CTP. The Mg(2+) site is built by aspartate 21 and aspartate 23. Residues arginine 91, arginine 137, and arginine 140 each coordinate ATP. CTP-binding residues include arginine 91, arginine 137, and arginine 140. One can recognise an HD domain in the interval 225–326 (CGDHVMRVLD…LRLLKDCDAL (102 aa)).

This sequence belongs to the tRNA nucleotidyltransferase/poly(A) polymerase family. Bacterial CCA-adding enzyme type 1 subfamily. In terms of assembly, monomer. Can also form homodimers and oligomers. The cofactor is Mg(2+). Ni(2+) is required as a cofactor.

It carries out the reaction a tRNA precursor + 2 CTP + ATP = a tRNA with a 3' CCA end + 3 diphosphate. The enzyme catalyses a tRNA with a 3' CCA end + 2 CTP + ATP = a tRNA with a 3' CCACCA end + 3 diphosphate. Catalyzes the addition and repair of the essential 3'-terminal CCA sequence in tRNAs without using a nucleic acid template. Adds these three nucleotides in the order of C, C, and A to the tRNA nucleotide-73, using CTP and ATP as substrates and producing inorganic pyrophosphate. tRNA 3'-terminal CCA addition is required both for tRNA processing and repair. Also involved in tRNA surveillance by mediating tandem CCA addition to generate a CCACCA at the 3' terminus of unstable tRNAs. While stable tRNAs receive only 3'-terminal CCA, unstable tRNAs are marked with CCACCA and rapidly degraded. This chain is Multifunctional CCA protein, found in Chromobacterium violaceum (strain ATCC 12472 / DSM 30191 / JCM 1249 / CCUG 213 / NBRC 12614 / NCIMB 9131 / NCTC 9757 / MK).